We begin with the raw amino-acid sequence, 529 residues long: Peptide chain release factor 3 (529 aa).

The tr-type G domain occupies 11-280 (SKRRTFAIIS…SLIKWAPSPI (270 aa)). Residues 20 to 27 (SHPDAGKT), 88 to 92 (DTPGH), and 142 to 145 (NKLD) each bind GTP.

Belongs to the TRAFAC class translation factor GTPase superfamily. Classic translation factor GTPase family. PrfC subfamily.

It localises to the cytoplasm. Its function is as follows. Increases the formation of ribosomal termination complexes and stimulates activities of RF-1 and RF-2. It binds guanine nucleotides and has strong preference for UGA stop codons. It may interact directly with the ribosome. The stimulation of RF-1 and RF-2 is significantly reduced by GTP and GDP, but not by GMP. This chain is Peptide chain release factor 3, found in Buchnera aphidicola subsp. Schizaphis graminum (strain Sg).